We begin with the raw amino-acid sequence, 544 residues long: Probable protein kinase UbiB (544 aa).

In terms of domain architecture, Protein kinase spans D123–L501. ATP is bound by residues L129 to V137 and K152. Residue D287 is the Proton acceptor of the active site. 2 helical membrane-spanning segments follow: residues A496–V516 and T519–W539.

It belongs to the ABC1 family. UbiB subfamily.

It is found in the cell inner membrane. Its pathway is cofactor biosynthesis; ubiquinone biosynthesis [regulation]. Is probably a protein kinase regulator of UbiI activity which is involved in aerobic coenzyme Q (ubiquinone) biosynthesis. The chain is Probable protein kinase UbiB from Vibrio vulnificus (strain YJ016).